The chain runs to 809 residues: Chloride channel protein F (809 aa).

Over 1 to 65 (MSTSKYSKMI…SWAKFARLNN (65 aa)) the chain is Cytoplasmic. The next 11 helical transmembrane spans lie at 66-86 (FYIW…LVAV), 110-130 (LQYL…CFII), 152-172 (FWNP…GLLL), 218-238 (AACC…GVLF), 246-266 (FYLI…AVGI), 295-315 (LIAF…FISL), 333-353 (ITPF…SFPL), 395-415 (GIIL…AVSI), 425-445 (IPLF…MLVL), 459-479 (VVGA…AMII), and 486-506 (LTYM…GNLL). Residues 539-597 (MKRDLYYVCQNTTLSQISNLLKRVDEHSIPVVSSDNDLQLIGTISTTTLEEVIAYHERL) form the CBS 1 domain. 2 disordered regions span residues 604–646 (PLSL…NNQN) and 692–729 (NNNF…NNNS). The segment covering 620-646 (NDNINNNQNNNNNNNNNNNNNNSNNQN) has biased composition (low complexity). A CBS 2 domain is found at 756–809 (IDSSPFQIQETMPVRKIVFMFMMLGGNILYVTNKGKLTGVVAKTELVHQNNNKH).

This sequence belongs to the chloride channel (TC 2.A.49) family.

The protein localises to the membrane. Functionally, voltage-gated chloride channel. Chloride channels may have several functions including the regulation of cell volume, membrane potential stabilization and signal transduction. The sequence is that of Chloride channel protein F (clcF) from Dictyostelium discoideum (Social amoeba).